The chain runs to 609 residues: Carotenoid cleavage dioxygenase 7, chloroplastic (609 aa).

The transit peptide at 1–34 directs the protein to the chloroplast; the sequence is MATQAIAPMHAAVVHRHHVLPPRRCVRRRGVFVR. The Fe cation site is built by histidine 263, histidine 316, histidine 394, and histidine 603.

Belongs to the carotenoid oxygenase family. Fe(2+) is required as a cofactor. In terms of tissue distribution, expressed in vascular bundles of roots, leaves, stems and panicles.

It localises to the plastid. The protein localises to the chloroplast. It catalyses the reaction 9-cis-beta-carotene + O2 = 9-cis-10'-apo-beta-carotenal + beta-ionone. Involved in strigolactones biosynthesis by cleaving asymmetrically a variety of linear and cyclic carotenoids at the 9-10 double bond. Produces one C(13) beta-ionone and the C(27) 10'-apo-beta-carotenal. Strigolactones are hormones that inhibit tillering and shoot branching through the MAX-dependent pathway, contribute to the regulation of shoot architectural response to phosphate-limiting conditions and function as rhizosphere signal that stimulates hyphal branching of arbuscular mycorrhizal fungi and trigger seed germination of root parasitic weeds. Can rescue the phenotype in the Arabidopsis max3 mutant. This is Carotenoid cleavage dioxygenase 7, chloroplastic (CCD7) from Oryza sativa subsp. japonica (Rice).